The sequence spans 176 residues: Nucleoside triphosphate/diphosphate phosphatase (176 aa).

Arg-23 functions as the Proton donor in the catalytic mechanism. 6 residues coordinate Mg(2+): Asn-87, Asp-103, Asp-105, Asp-107, Asp-120, and Glu-123.

Belongs to the Ntdp family. The cofactor is Mg(2+).

The enzyme catalyses a ribonucleoside 5'-triphosphate + H2O = a ribonucleoside 5'-diphosphate + phosphate + H(+). The catalysed reaction is a ribonucleoside 5'-diphosphate + H2O = a ribonucleoside 5'-phosphate + phosphate + H(+). Functionally, has nucleoside phosphatase activity towards nucleoside triphosphates and nucleoside diphosphates. The protein is Nucleoside triphosphate/diphosphate phosphatase of Bacillus pumilus (strain SAFR-032).